The primary structure comprises 265 residues: Small ribosomal subunit protein uS2 (265 aa).

Belongs to the universal ribosomal protein uS2 family.

The polypeptide is Small ribosomal subunit protein uS2 (Ligilactobacillus salivarius (strain UCC118) (Lactobacillus salivarius)).